Reading from the N-terminus, the 175-residue chain is UPF0398 protein SGO_0588 (175 aa).

Belongs to the UPF0398 family.

In Streptococcus gordonii (strain Challis / ATCC 35105 / BCRC 15272 / CH1 / DL1 / V288), this protein is UPF0398 protein SGO_0588.